The sequence spans 741 residues: uncharacterized protein (741 aa).

The next 5 helical transmembrane spans lie at 34-54 (WLLW…LLII), 76-96 (LIIP…FING), 120-140 (LAVL…FVSL), 156-176 (LSVF…LIII), and 187-207 (LLLL…AFSI). The segment covering 404 to 423 (EAEEKERQEKEEKEKAEKDN) has biased composition (basic and acidic residues). 2 disordered regions span residues 404 to 473 (EAEE…FRPR) and 555 to 647 (QKEL…ENAK). The span at 424 to 439 (GNGQDSNKVNSVSTEP) shows a compositional bias: polar residues. Composition is skewed to basic and acidic residues over residues 445–465 (SDAD…DSSK) and 555–573 (QKEL…DQKS). Residues 623 to 643 (DNTDESEDKQSEEEEKFDEEI) are compositionally biased toward acidic residues. 2 helical membrane-spanning segments follow: residues 655 to 675 (AFFN…ENGA) and 715 to 735 (VIIA…FFAY).

To M.pneumoniae MPN_333.

It localises to the cell membrane. This is an uncharacterized protein from Mycoplasma pneumoniae (strain ATCC 29342 / M129 / Subtype 1) (Mycoplasmoides pneumoniae).